Consider the following 212-residue polypeptide: Thiamine-phosphate synthase (212 aa).

4-amino-2-methyl-5-(diphosphooxymethyl)pyrimidine contacts are provided by residues 40-44 and asparagine 75; that span reads QFREK. Residues aspartate 76 and aspartate 95 each coordinate Mg(2+). Serine 113 is a binding site for 4-amino-2-methyl-5-(diphosphooxymethyl)pyrimidine. Position 139–141 (139–141) interacts with 2-[(2R,5Z)-2-carboxy-4-methylthiazol-5(2H)-ylidene]ethyl phosphate; the sequence is TPS. Lysine 142 lines the 4-amino-2-methyl-5-(diphosphooxymethyl)pyrimidine pocket. 2-[(2R,5Z)-2-carboxy-4-methylthiazol-5(2H)-ylidene]ethyl phosphate is bound by residues glycine 171 and 191 to 192; that span reads IS.

The protein belongs to the thiamine-phosphate synthase family. Requires Mg(2+) as cofactor.

It carries out the reaction 2-[(2R,5Z)-2-carboxy-4-methylthiazol-5(2H)-ylidene]ethyl phosphate + 4-amino-2-methyl-5-(diphosphooxymethyl)pyrimidine + 2 H(+) = thiamine phosphate + CO2 + diphosphate. The enzyme catalyses 2-(2-carboxy-4-methylthiazol-5-yl)ethyl phosphate + 4-amino-2-methyl-5-(diphosphooxymethyl)pyrimidine + 2 H(+) = thiamine phosphate + CO2 + diphosphate. The catalysed reaction is 4-methyl-5-(2-phosphooxyethyl)-thiazole + 4-amino-2-methyl-5-(diphosphooxymethyl)pyrimidine + H(+) = thiamine phosphate + diphosphate. It participates in cofactor biosynthesis; thiamine diphosphate biosynthesis; thiamine phosphate from 4-amino-2-methyl-5-diphosphomethylpyrimidine and 4-methyl-5-(2-phosphoethyl)-thiazole: step 1/1. Functionally, condenses 4-methyl-5-(beta-hydroxyethyl)thiazole monophosphate (THZ-P) and 2-methyl-4-amino-5-hydroxymethyl pyrimidine pyrophosphate (HMP-PP) to form thiamine monophosphate (TMP). This Staphylococcus carnosus (strain TM300) protein is Thiamine-phosphate synthase.